We begin with the raw amino-acid sequence, 342 residues long: Gibberellin cluster GA4 desaturase (342 aa).

The disordered stretch occupies residues 127-183; it reads PELAPPYPMPGKSSSGSKEREAIPANELPTTRAKGFQKGEEEGPVRKPHKDWGPSGA.

It belongs to the asaB hydroxylase/desaturase family.

It functions in the pathway plant hormone biosynthesis; gibberellin biosynthesis. Its function is as follows. GA4 desaturase; part of the gene cluster that mediates the biosynthesis of gibberellins (GAs), diterpenoids that may provide a selective advantage during infection of the preferred host plant, rice. Gibberellins (GAs) are diterpenoids and are synthesized via the mevalonate pathway. Biosynthesis of the major metabolite GA3 (gibberellic acid) from geranylgeranyl diphosphate (GGPP) requires 13 steps. The GGPP produced by the geranylgeranyl diphosphate synthase GGS2 is converted to ent-kaurene via ent-copalyldiphosphate in a two-step cyclization reaction performed by the bifunctional ent-copalyl diphosphate synthase/ent-kaurene synthase enzyme (CPS/KS). Ent-Kaurene is metabolized to GAs by a series of oxidation reactions catalyzed by cytochrome P450 monooxygenases. Cytochrome P450 monooxygenase P450-4 is an ent-kaurene oxidase that catalyzes the three oxidation steps between ent-kaurene and ent-kaurenoic acid. The highly multifunctional cytochrome P450 monooxygenase P450-1 then catalyzes four steps involving oxidation at two carbon atoms, in the main pathway from ent-kaurenoic acid to GA14 via GA12-aldehyde as well as producing kaurenolides and fujenoic acids as by-products. The cytochrome P450 monooxygenase P450-2 then converts GA14 to GA4 by removal of C-20. GA4 is further converted to GA7 by the GA4 desaturase DES via 1,2-desaturation before cytochrome P450 monooxygenase P450-3, a 13-hydroxylase, hydroxylates GA7 to GA3, the final product of the GA-biosynthetic pathway. This chain is Gibberellin cluster GA4 desaturase, found in Gibberella fujikuroi (strain CBS 195.34 / IMI 58289 / NRRL A-6831) (Bakanae and foot rot disease fungus).